The primary structure comprises 89 residues: Large ribosomal subunit protein bL28 (89 aa).

It belongs to the bacterial ribosomal protein bL28 family.

In Chlamydia muridarum (strain MoPn / Nigg), this protein is Large ribosomal subunit protein bL28.